Here is a 175-residue protein sequence, read N- to C-terminus: Nicotinamide-nucleotide adenylyltransferase 1 (175 aa).

The protein belongs to the archaeal NMN adenylyltransferase family.

It localises to the cytoplasm. The enzyme catalyses beta-nicotinamide D-ribonucleotide + ATP + H(+) = diphosphate + NAD(+). It functions in the pathway cofactor biosynthesis; NAD(+) biosynthesis; NAD(+) from nicotinamide D-ribonucleotide: step 1/1. The protein is Nicotinamide-nucleotide adenylyltransferase 1 of Sulfolobus acidocaldarius (strain ATCC 33909 / DSM 639 / JCM 8929 / NBRC 15157 / NCIMB 11770).